The sequence spans 25 residues: Pregnancy-associated glycoprotein 72 (25 aa).

Asn-4 and Asn-21 each carry an N-linked (GlcNAc...) asparagine glycan.

It belongs to the peptidase A1 family. N-glycosylated. Expressed in chorionic epithelium (trophectoderm).

Its subcellular location is the secreted. The protein resides in the extracellular space. The polypeptide is Pregnancy-associated glycoprotein 72 (Bison bison (American bison)).